Here is a 365-residue protein sequence, read N- to C-terminus: Alanine racemase (365 aa).

The active-site Proton acceptor; specific for D-alanine is K35. At K35 the chain carries N6-(pyridoxal phosphate)lysine. R130 lines the substrate pocket. The active-site Proton acceptor; specific for L-alanine is Y256. M304 is a binding site for substrate.

Belongs to the alanine racemase family. Pyridoxal 5'-phosphate is required as a cofactor.

It catalyses the reaction L-alanine = D-alanine. The protein operates within amino-acid biosynthesis; D-alanine biosynthesis; D-alanine from L-alanine: step 1/1. Its function is as follows. Catalyzes the interconversion of L-alanine and D-alanine. May also act on other amino acids. This chain is Alanine racemase (alr), found in Polaromonas naphthalenivorans (strain CJ2).